Consider the following 185-residue polypeptide: RRM domain-containing protein ECU09_1470 (185 aa).

2 RRM domains span residues 8-87 and 101-170; these read NQLA…YAKR and KKVY…PAYE.

The polypeptide is RRM domain-containing protein ECU09_1470 (Encephalitozoon cuniculi (strain GB-M1) (Microsporidian parasite)).